The chain runs to 426 residues: Glutamyl-tRNA reductase (426 aa).

Residues 52-55 (TCNR), serine 110, 115-117 (EYE), and glutamine 121 each bind substrate. Cysteine 53 acts as the Nucleophile in catalysis. 190 to 195 (GAGEMA) contacts NADP(+).

Belongs to the glutamyl-tRNA reductase family. Homodimer.

The catalysed reaction is (S)-4-amino-5-oxopentanoate + tRNA(Glu) + NADP(+) = L-glutamyl-tRNA(Glu) + NADPH + H(+). It participates in porphyrin-containing compound metabolism; protoporphyrin-IX biosynthesis; 5-aminolevulinate from L-glutamyl-tRNA(Glu): step 1/2. Its function is as follows. Catalyzes the NADPH-dependent reduction of glutamyl-tRNA(Glu) to glutamate 1-semialdehyde (GSA). The protein is Glutamyl-tRNA reductase of Saccharolobus solfataricus (strain ATCC 35092 / DSM 1617 / JCM 11322 / P2) (Sulfolobus solfataricus).